We begin with the raw amino-acid sequence, 152 residues long: UPF0178 protein CKL_3490 (152 aa).

This sequence belongs to the UPF0178 family.

The polypeptide is UPF0178 protein CKL_3490 (Clostridium kluyveri (strain ATCC 8527 / DSM 555 / NBRC 12016 / NCIMB 10680 / K1)).